Consider the following 940-residue polypeptide: AP-2 complex subunit alpha (940 aa).

S632 and S634 each carry phosphoserine. Polar residues predominate over residues S651–T662. Residues S651–S679 are disordered. Low complexity predominate over residues S668–S679.

The protein belongs to the adaptor complexes large subunit family. Adaptor protein complex 2 (AP-2) is a heterotetramer composed of two large adaptins (alpha-type and beta-type subunits), a medium adaptin (mu-type subunit AP50) and a small adaptin (sigma-type subunit AP17). As to expression, expressed in the Garland cells, imaginal disks, adult midgut precursors, the antenno-maxillary complex, the endoderm, the fat bodies, and the visceral mesoderm and cells of the CNS and PNS including neuroblasts, the presumptive stomatogastric nervous system, and the lateral chordotonal sense organs.

Its subcellular location is the cell membrane. The protein localises to the membrane. The protein resides in the coated pit. In terms of biological role, adaptins are components of the adapter complexes which link clathrin to receptors in coated vesicles. Clathrin-associated protein complexes are believed to interact with the cytoplasmic tails of membrane proteins, leading to their selection and concentration. AP-2alpha is a subunit of the plasma membrane adapter. This chain is AP-2 complex subunit alpha (AP-2alpha), found in Drosophila melanogaster (Fruit fly).